Here is a 914-residue protein sequence, read N- to C-terminus: Protein translocase subunit SecA (914 aa).

ATP contacts are provided by residues Gln87, 105–109 (GEGKT), and Asp508. The Zn(2+) site is built by Cys898, Cys900, Cys909, and His910.

It belongs to the SecA family. In terms of assembly, monomer and homodimer. Part of the essential Sec protein translocation apparatus which comprises SecA, SecYEG and auxiliary proteins SecDF-YajC and YidC. Zn(2+) serves as cofactor.

The protein localises to the cell inner membrane. It is found in the cytoplasm. It carries out the reaction ATP + H2O + cellular proteinSide 1 = ADP + phosphate + cellular proteinSide 2.. Functionally, part of the Sec protein translocase complex. Interacts with the SecYEG preprotein conducting channel. Has a central role in coupling the hydrolysis of ATP to the transfer of proteins into and across the cell membrane, serving both as a receptor for the preprotein-SecB complex and as an ATP-driven molecular motor driving the stepwise translocation of polypeptide chains across the membrane. The polypeptide is Protein translocase subunit SecA (Xylella fastidiosa (strain M12)).